Reading from the N-terminus, the 474-residue chain is Bifunctional protein HldE (474 aa).

A ribokinase region spans residues 1 to 318; the sequence is MKLSMPRFDQ…RAIQREEGSE (318 aa). Position 194–197 (194–197) interacts with ATP; the sequence is NLSE. The active site involves aspartate 263. The tract at residues 343-474 is cytidylyltransferase; that stretch reads FTNGCFDILH…AIVEKIRKSE (132 aa).

It in the N-terminal section; belongs to the carbohydrate kinase PfkB family. In the C-terminal section; belongs to the cytidylyltransferase family. Homodimer.

The enzyme catalyses D-glycero-beta-D-manno-heptose 7-phosphate + ATP = D-glycero-beta-D-manno-heptose 1,7-bisphosphate + ADP + H(+). It catalyses the reaction D-glycero-beta-D-manno-heptose 1-phosphate + ATP + H(+) = ADP-D-glycero-beta-D-manno-heptose + diphosphate. Its pathway is nucleotide-sugar biosynthesis; ADP-L-glycero-beta-D-manno-heptose biosynthesis; ADP-L-glycero-beta-D-manno-heptose from D-glycero-beta-D-manno-heptose 7-phosphate: step 1/4. It participates in nucleotide-sugar biosynthesis; ADP-L-glycero-beta-D-manno-heptose biosynthesis; ADP-L-glycero-beta-D-manno-heptose from D-glycero-beta-D-manno-heptose 7-phosphate: step 3/4. Catalyzes the phosphorylation of D-glycero-D-manno-heptose 7-phosphate at the C-1 position to selectively form D-glycero-beta-D-manno-heptose-1,7-bisphosphate. In terms of biological role, catalyzes the ADP transfer from ATP to D-glycero-beta-D-manno-heptose 1-phosphate, yielding ADP-D-glycero-beta-D-manno-heptose. In Pseudomonas fluorescens (strain Pf0-1), this protein is Bifunctional protein HldE.